The sequence spans 104 residues: Small ribosomal subunit protein uS10 (104 aa).

The protein belongs to the universal ribosomal protein uS10 family. Part of the 30S ribosomal subunit.

Involved in the binding of tRNA to the ribosomes. This chain is Small ribosomal subunit protein uS10, found in Variovorax paradoxus (strain S110).